Here is a 236-residue protein sequence, read N- to C-terminus: Probable 2-phosphosulfolactate phosphatase (236 aa).

Belongs to the ComB family. Mg(2+) is required as a cofactor.

It carries out the reaction (2R)-O-phospho-3-sulfolactate + H2O = (2R)-3-sulfolactate + phosphate. This Gloeobacter violaceus (strain ATCC 29082 / PCC 7421) protein is Probable 2-phosphosulfolactate phosphatase.